Here is a 380-residue protein sequence, read N- to C-terminus: Crotonobetainyl-CoA reductase (380 aa).

It belongs to the acyl-CoA dehydrogenase family. Homotetramer. It depends on FAD as a cofactor.

It is found in the cytoplasm. The catalysed reaction is 4-(trimethylamino)butanoyl-CoA + oxidized [electron-transfer flavoprotein] + H(+) = crotonobetainyl-CoA + reduced [electron-transfer flavoprotein]. Its pathway is amine and polyamine metabolism; carnitine metabolism. In terms of biological role, catalyzes the reduction of crotonobetainyl-CoA to gamma-butyrobetainyl-CoA. The sequence is that of Crotonobetainyl-CoA reductase from Proteus sp. (strain LE138).